The following is a 334-amino-acid chain: Dolichyl-phosphate beta-glucosyltransferase (334 aa).

Over 1–12 (MRALRFLIENRN) the chain is Lumenal. Residues 13–33 (TVFFTLLVALVLSLYLLVYLF) traverse the membrane as a helical segment. At 34–334 (SHTPRPPYPE…LGIYRDNKKC (301 aa)) the chain is on the cytoplasmic side.

Belongs to the glycosyltransferase 2 family.

Its subcellular location is the endoplasmic reticulum membrane. It carries out the reaction a di-trans,poly-cis-dolichyl phosphate + UDP-alpha-D-glucose = a di-trans,poly-cis-dolichyl beta-D-glucosyl phosphate + UDP. The protein operates within protein modification; protein glycosylation. Functionally, endoplasmic reticulum membrane-bound UDP-glucose:dolichyl-phosphate glucosyltransferase involved in protein N-linked glycosylation. The protein is Dolichyl-phosphate beta-glucosyltransferase of Saccharomyces cerevisiae (strain ATCC 204508 / S288c) (Baker's yeast).